Here is a 260-residue protein sequence, read N- to C-terminus: Cytochrome c oxidase subunit 2 (260 aa).

At 1–41 (MIVLKWLFFTISPCDAAEPWQLGFQDAATPIMQGIIDLHHD) the chain is on the mitochondrial intermembrane side. The chain crosses the membrane as a helical span at residues 42–62 (IFFFLILILVFVLWILVRALW). Residues 63-86 (HFHYKKNAIPQRIVHGTTIEILWT) lie on the Mitochondrial matrix side of the membrane. The helical transmembrane segment at 87–107 (IFPSIILMFIAIPSFALLYSM) threads the bilayer. Residues 108-260 (DEVVVDPAIT…NQLIPQTGEA (153 aa)) lie on the Mitochondrial intermembrane side of the membrane. Residues H187, C222, E224, C226, H230, and M233 each coordinate Cu cation. E224 contacts Mg(2+).

Belongs to the cytochrome c oxidase subunit 2 family. As to quaternary structure, component of the cytochrome c oxidase (complex IV, CIV), a multisubunit enzyme composed of a catalytic core of 3 subunits and several supernumerary subunits. The complex exists as a monomer or a dimer and forms supercomplexes (SCs) in the inner mitochondrial membrane with ubiquinol-cytochrome c oxidoreductase (cytochrome b-c1 complex, complex III, CIII). Cu cation is required as a cofactor.

The protein localises to the mitochondrion inner membrane. It carries out the reaction 4 Fe(II)-[cytochrome c] + O2 + 8 H(+)(in) = 4 Fe(III)-[cytochrome c] + 2 H2O + 4 H(+)(out). Its function is as follows. Component of the cytochrome c oxidase, the last enzyme in the mitochondrial electron transport chain which drives oxidative phosphorylation. The respiratory chain contains 3 multisubunit complexes succinate dehydrogenase (complex II, CII), ubiquinol-cytochrome c oxidoreductase (cytochrome b-c1 complex, complex III, CIII) and cytochrome c oxidase (complex IV, CIV), that cooperate to transfer electrons derived from NADH and succinate to molecular oxygen, creating an electrochemical gradient over the inner membrane that drives transmembrane transport and the ATP synthase. Cytochrome c oxidase is the component of the respiratory chain that catalyzes the reduction of oxygen to water. Electrons originating from reduced cytochrome c in the intermembrane space (IMS) are transferred via the dinuclear copper A center (CU(A)) of subunit 2 and heme A of subunit 1 to the active site in subunit 1, a binuclear center (BNC) formed by heme A3 and copper B (CU(B)). The BNC reduces molecular oxygen to 2 water molecules using 4 electrons from cytochrome c in the IMS and 4 protons from the mitochondrial matrix. In Arabidopsis thaliana (Mouse-ear cress), this protein is Cytochrome c oxidase subunit 2 (COX2).